A 476-amino-acid polypeptide reads, in one-letter code: Chromosomal replication initiator protein DnaA (476 aa).

Positions 1–87 are domain I, interacts with DnaA modulators; sequence MSDRSDPTHA…AGVSNFAIVV (87 aa). The tract at residues 87 to 131 is domain II; it reads VNPGIAQDAFAQHPEPAEQPYIETPTITAPTDNPGLPASPSRGDS. The segment at 132-348 is domain III, AAA+ region; the sequence is RLNPKYGFDT…GTLIRVTAFA (217 aa). Gly-176, Gly-178, Lys-179, and Thr-180 together coordinate ATP. The tract at residues 349–476 is domain IV, binds dsDNA; it reads SLNKTPVDLA…IKQNHRYGKM (128 aa).

The protein belongs to the DnaA family. In terms of assembly, oligomerizes as a right-handed, spiral filament on DNA at oriC.

It localises to the cytoplasm. Functionally, plays an essential role in the initiation and regulation of chromosomal replication. ATP-DnaA binds to the origin of replication (oriC) to initiate formation of the DNA replication initiation complex once per cell cycle. Binds the DnaA box (a 9 base pair repeat at the origin) and separates the double-stranded (ds)DNA. Forms a right-handed helical filament on oriC DNA; dsDNA binds to the exterior of the filament while single-stranded (ss)DNA is stabiized in the filament's interior. The ATP-DnaA-oriC complex binds and stabilizes one strand of the AT-rich DNA unwinding element (DUE), permitting loading of DNA polymerase. After initiation quickly degrades to an ADP-DnaA complex that is not apt for DNA replication. Binds acidic phospholipids. This is Chromosomal replication initiator protein DnaA from Clavibacter sepedonicus (Clavibacter michiganensis subsp. sepedonicus).